Consider the following 537-residue polypeptide: Ribonuclease Y (537 aa).

The helical transmembrane segment at 4–24 threads the bilayer; sequence FPIIMSVFAAIIGLVIGYVSV. The tract at residues 112–148 is disordered; it reads ASTLDRKDDNLSNKEKALEQKEQSLSDKSKHIDAREE. One can recognise a KH domain in the interval 227–287; sequence TNSTVHLPDD…IRREIARMTM (61 aa). In terms of domain architecture, HD spans 353–446; it reads VLRHSIEVAK…VAAADALSAA (94 aa).

Belongs to the RNase Y family.

The protein localises to the cell membrane. In terms of biological role, endoribonuclease that initiates mRNA decay. This Streptococcus sanguinis (strain SK36) protein is Ribonuclease Y.